The primary structure comprises 250 residues: DNA repair protein RecO (250 aa).

This sequence belongs to the RecO family.

In terms of biological role, involved in DNA repair and RecF pathway recombination. The sequence is that of DNA repair protein RecO from Staphylococcus haemolyticus (strain JCSC1435).